The chain runs to 112 residues: Colipase (112 aa).

An N-terminal signal peptide occupies residues 1-17 (MEKILILLLVALSVAYA). A propeptide spans 18–22 (APGPR) (enterostatin, activation peptide). Intrachain disulfides connect Cys34–Cys45, Cys40–Cys56, Cys44–Cys78, Cys66–Cys86, and Cys80–Cys104.

Belongs to the colipase family. In terms of assembly, forms a 1:1 stoichiometric complex with pancreatic lipase. In terms of tissue distribution, expressed by the pancreas.

It localises to the secreted. Colipase is a cofactor of pancreatic lipase. It allows the lipase to anchor itself to the lipid-water interface. Without colipase the enzyme is washed off by bile salts, which have an inhibitory effect on the lipase. Its function is as follows. Enterostatin has a biological activity as a satiety signal. This is Colipase from Homo sapiens (Human).